A 72-amino-acid chain; its full sequence is Translation initiation factor IF-1 (72 aa).

The 72-residue stretch at 1-72 (MAKDDVIQMQ…SRARIVFRAK (72 aa)) folds into the S1-like domain.

This sequence belongs to the IF-1 family. In terms of assembly, component of the 30S ribosomal translation pre-initiation complex which assembles on the 30S ribosome in the order IF-2 and IF-3, IF-1 and N-formylmethionyl-tRNA(fMet); mRNA recruitment can occur at any time during PIC assembly.

Its subcellular location is the cytoplasm. One of the essential components for the initiation of protein synthesis. Stabilizes the binding of IF-2 and IF-3 on the 30S subunit to which N-formylmethionyl-tRNA(fMet) subsequently binds. Helps modulate mRNA selection, yielding the 30S pre-initiation complex (PIC). Upon addition of the 50S ribosomal subunit IF-1, IF-2 and IF-3 are released leaving the mature 70S translation initiation complex. The chain is Translation initiation factor IF-1 from Burkholderia mallei (strain NCTC 10247).